A 328-amino-acid polypeptide reads, in one-letter code: Formimidoylglutamase (328 aa).

Mn(2+) contacts are provided by His133, Asp159, His161, Asp163, Asp253, and Asp255.

The protein belongs to the arginase family. The cofactor is Mn(2+).

It carries out the reaction N-formimidoyl-L-glutamate + H2O = formamide + L-glutamate. The protein operates within amino-acid degradation; L-histidine degradation into L-glutamate; L-glutamate from N-formimidoyl-L-glutamate (hydrolase route): step 1/1. Its function is as follows. Catalyzes the conversion of N-formimidoyl-L-glutamate to L-glutamate and formamide. This is Formimidoylglutamase from Streptococcus pyogenes serotype M5 (strain Manfredo).